The sequence spans 124 residues: Max-like protein 1 (124 aa).

The span at 1–10 shows a compositional bias: acidic residues; the sequence is MSDMSDLEDD. The segment at 1-44 is disordered; that stretch reads MSDMSDLEDDQTGHCGSGEHSGPFDPKRHAREQHNALERRRRDN. The basic motif stretch occupies residues 29–42; sequence HAREQHNALERRRR. Residues 29 to 82 form the bHLH domain; sequence HAREQHNALERRRRDNIKDMYTSLREVVPDANGERVQASRAVILKKAIESIEKG. The span at 32–44 shows a compositional bias: basic and acidic residues; the sequence is EQHNALERRRRDN. Residues 43–82 are helix-loop-helix motif; that stretch reads DNIKDMYTSLREVVPDANGERVQASRAVILKKAIESIEKG. Residues 86–113 adopt a coiled-coil conformation; it reads SATLSVDVAEQESKNAKLREEIARLKAK.

The protein belongs to the MAX family. As to quaternary structure, heterodimer with mdl-1 in presence and absence of DNA. Interacts with tdpt-1; the interaction promotes axon regeneration after injury. As to expression, expressed in D-type motor neurons.

It localises to the nucleus. Transcriptional regulator which binds to the E box motif 5'-CACGTG-3', when in a heterodimeric complex with mdl-1. Involved in the control of lifespan in response to dietary restriction, the decline in protein homeostasis associated with normal aging and may overlap with the insulin-like signaling pathway. Involved in promoting infection by the microsporidian pathogen N.parisii. Required for the expression of svh-2 and the promotion of axon regeneration after injury. This Caenorhabditis elegans protein is Max-like protein 1.